We begin with the raw amino-acid sequence, 132 residues long: Large ribosomal subunit protein uL14 (132 aa).

It belongs to the universal ribosomal protein uL14 family. As to quaternary structure, part of the 50S ribosomal subunit. Forms a cluster with proteins L3 and L24e, part of which may contact the 16S rRNA in 2 intersubunit bridges.

Binds to 23S rRNA. Forms part of two intersubunit bridges in the 70S ribosome. The sequence is that of Large ribosomal subunit protein uL14 from Methanoregula boonei (strain DSM 21154 / JCM 14090 / 6A8).